The chain runs to 268 residues: L-aspartate dehydrogenase (268 aa).

The NAD(+) site is built by Ala125 and Asn191. Residue His221 is part of the active site.

It belongs to the L-aspartate dehydrogenase family.

The enzyme catalyses L-aspartate + NADP(+) + H2O = oxaloacetate + NH4(+) + NADPH + H(+). It carries out the reaction L-aspartate + NAD(+) + H2O = oxaloacetate + NH4(+) + NADH + H(+). The protein operates within cofactor biosynthesis; NAD(+) biosynthesis; iminoaspartate from L-aspartate (dehydrogenase route): step 1/1. In terms of biological role, specifically catalyzes the NAD or NADP-dependent dehydrogenation of L-aspartate to iminoaspartate. This chain is L-aspartate dehydrogenase, found in Brucella anthropi (strain ATCC 49188 / DSM 6882 / CCUG 24695 / JCM 21032 / LMG 3331 / NBRC 15819 / NCTC 12168 / Alc 37) (Ochrobactrum anthropi).